A 1196-amino-acid chain; its full sequence is Contactin rig-6 (1196 aa).

Positions 1-19 (MMMLIRCISIFLLFGFVNA) are cleaved as a signal peptide. Residues N100 and N195 are each glycosylated (N-linked (GlcNAc...) asparagine). Ig-like C2-type domains follow at residues 144-225 (PQIS…ARNS) and 232-319 (PPIL…CSLS). 2 cysteine pairs are disulfide-bonded: C169/C220 and C263/C316. An N-linked (GlcNAc...) asparagine glycan is attached at N343. Ig-like C2-type domains lie at 355–438 (PQIF…VKLR), 441–533 (PSIL…ALLT), 539–626 (PVFP…VQLI), and 631–730 (PSIK…EFVT). Residues C372 and C420 are joined by a disulfide bond. N-linked (GlcNAc...) asparagine glycosylation occurs at N457. Disulfide bonds link C462/C517 and C562/C610. A glycan (N-linked (GlcNAc...) asparagine) is linked at N644. The cysteines at positions 653 and 718 are disulfide-linked. Fibronectin type-III domains are found at residues 736-844 (SPIA…TAPG), 849-961 (TIDN…SHGE), 963-1057 (KKVS…TKQH), and 1064-1168 (LIGK…LGSP). N-linked (GlcNAc...) asparagine glycans are attached at residues N895, N925, N945, N974, N979, N986, N1002, and N1092. A helical membrane pass occupies residues 1174 to 1194 (TTGSSDVPIPSLLLLLLLLLW). S1177 carries GPI-anchor amidated serine lipidation. Positions 1178 to 1196 (SDVPIPSLLLLLLLLLWRL) are cleaved as a propeptide — removed in mature form.

Belongs to the immunoglobulin superfamily. Contactin family. Interacts with sax-7; the interaction establishes synaptic connections between neurons. As to expression, expressed in neurons including the I1 and I3 pharyngeal interneurons, NSM and VNC motor neurons, HSN and CAN neurons, the ALM and PLM touch receptor neurons and other unidentified head neurons. Expressed in AVG interneurons. Also expressed in somatic muscles, the excretory canal, the excretory cell and the hypodermis.

It is found in the cell membrane. It localises to the perikaryon. Its subcellular location is the cell projection. The protein localises to the axon. The protein resides in the synapse. It is found in the cytoplasm. Probable cell adhesion protein involved in patterning of the nervous system, playing a role in ALM and PLM touch receptor axon growth and VNC axon navigation. By associating with the transmembrane protein sax-7, mediates axonal interactions to establish synaptic connections between the AVG interneuron and the two PHC sensory neurons. Also required for non-neuronal cell migration in the excretory canal, regulating excretory canal elongation and excretory cell morphogenesis. Plays a role in regulating male mating behavior. This chain is Contactin rig-6, found in Caenorhabditis elegans.